The sequence spans 196 residues: Probable malonic semialdehyde reductase RutE (196 aa).

It belongs to the nitroreductase family. HadB/RutE subfamily. The cofactor is FMN.

It carries out the reaction 3-hydroxypropanoate + NADP(+) = 3-oxopropanoate + NADPH + H(+). May reduce toxic product malonic semialdehyde to 3-hydroxypropionic acid, which is excreted. This is Probable malonic semialdehyde reductase RutE from Escherichia coli (strain SMS-3-5 / SECEC).